The following is a 165-amino-acid chain: Selenoprotein F (165 aa).

An N-terminal signal peptide occupies residues 1-31 (MVAMAAGPSGCLVPAFGLRLLLATVLQAVSA). Residue Sec-96 is a non-standard amino acid, selenocysteine.

In terms of assembly, forms a tight complex with UGGT1/UGCGL1. Interacts with UGGT2/UGCGL2. Interacts with RDH11. In terms of processing, the N-terminus is blocked. In terms of tissue distribution, higher levels in prostate and thyroid gland.

It is found in the endoplasmic reticulum lumen. In terms of biological role, may be involved in redox reactions associated with the formation of disulfide bonds. May contribute to the quality control of protein folding in the endoplasmic reticulum. May regulate protein folding by enhancing the catalytic activity of UGGT1/UGCGL1 and UGGT2/UGCGL2. The chain is Selenoprotein F from Homo sapiens (Human).